Consider the following 483-residue polypeptide: GTPase Obg (483 aa).

The Obg domain occupies 2 to 159 (SRFIDRVVLH…RDLVLELKSV (158 aa)). Positions 160–340 (ADVGLLGFPS…LTFALAKMVR (181 aa)) constitute an OBG-type G domain. Residues 166 to 173 (GFPSAGKS), 191 to 195 (FTTLV), 212 to 215 (DVPG), 292 to 295 (NKTD), and 321 to 323 (SAV) contribute to the GTP site. The Mg(2+) site is built by Ser-173 and Thr-193. The OCT domain maps to 358–438 (PVKVKDSSFT…IGDVSFEWEP (81 aa)).

The protein belongs to the TRAFAC class OBG-HflX-like GTPase superfamily. OBG GTPase family. As to quaternary structure, monomer. The cofactor is Mg(2+).

The protein localises to the cytoplasm. Its function is as follows. An essential GTPase which binds GTP, GDP and possibly (p)ppGpp with moderate affinity, with high nucleotide exchange rates and a fairly low GTP hydrolysis rate. Plays a role in control of the cell cycle, stress response, ribosome biogenesis and in those bacteria that undergo differentiation, in morphogenesis control. This is GTPase Obg from Rhodococcus erythropolis (strain PR4 / NBRC 100887).